The following is a 327-amino-acid chain: MEDSLDTRLYPEPSLSQVGSWRVSSLPSGSPQLPSPTGPSLETARAHILALGPQQLLAQDEEGDTLLHLFAARGLRWAAYAAAEVLQMYRQLDIREHKGKTPLLVAAAANQPLIVEDLLSLGAEPNATDHQGRSVLHVAATYGLPGVLSAVFKSGIQVDLEARDFEGLTPLHTAVLALNAAMLPASVCPRMQNSQARDRLTCVQMLLQMGASHTSQEIKSNKTILHLAVQAANPTLVQLLLGLPRGDLRAFVNMKAHGNTALHMAAALPPGPPQEAIVRHLLAAGADPTLRNLENEQPVHLLRPGPGPEGLRQLLKRSRTAPPGLSS.

Residues 1–40 (MEDSLDTRLYPEPSLSQVGSWRVSSLPSGSPQLPSPTGPS) are disordered. Residues 14-23 (SLSQVGSWRV) show a composition bias toward polar residues. ANK repeat units follow at residues 62–97 (EGDTLLHLFAARGLRWAAYAAAEVLQMYRQLDIREH), 98–127 (KGKTPLLVAAAANQPLIVEDLLSLGAEPNA), 131–160 (QGRSVLHVAATYGLPGVLSAVFKSGIQVDL), 166–215 (EGLT…SHTS), 220–250 (SNKTILHLAVQAANPTLVQLLLGLPRGDLRA), and 257–290 (HGNTALHMAAALPPGPPQEAIVRHLLAAGADPTL). A disordered region spans residues 293–327 (LENEQPVHLLRPGPGPEGLRQLLKRSRTAPPGLSS).

This sequence belongs to the NF-kappa-B inhibitor family. In terms of assembly, interacts with NFKB1, RELA and RELB; in the nucleus. As to expression, specifically expressed in spleen and at low levels in thymus. Expressed in a population of antigen-presenting dendritic cells which may act as regulators of systemic inflammatory response.

It is found in the nucleus. Its function is as follows. Regulates the expression of IL-2, IL-6, and other cytokines through regulation on NF-kappa-B activity. Functions in the regulation of inflammatory responses. Involved in the induction of T helper 17 cells (Th17) differentiation upon recognition of antigen by T cell antigen receptor (TCR). According to PubMed:11931770, it may also regulate TCR-induced negative selection of thymocytes. The sequence is that of NF-kappa-B inhibitor delta (Nfkbid) from Mus musculus (Mouse).